The following is a 278-amino-acid chain: MTDLNKHIKQAQTQRKQLLEESRELHREKLLVQAENRFFLEYLTNKTEEYTEQPEKVWNSYLQKSGEIERRRQESASRYAEQISVLKTALLQKENIQSSLKRKLQAMRDIAILKEKQEKEIQTLQEETKKVQAETASKTREVQAQLLQEKRLLEKQLSEPDRRLLGKRKRRELNMKAQALKLAAKRFIFEYSCGINRENQQFKKELLQLIEQAQKLTATQSHLENRKQQLQQEQWYLESLIQARQRLQGSHNQCLNRQDVPKTTPSLPQGTKSRINPK.

Coiled-coil stretches lie at residues 1–30 and 105–243; these read MTDLNKHIKQAQTQRKQLLEESRELHREKL and QAMR…LIQA. The disordered stretch occupies residues 253–278; the sequence is QCLNRQDVPKTTPSLPQGTKSRINPK.

The polypeptide is Coiled-coil domain-containing protein 121 (CCDC121) (Homo sapiens (Human)).